The following is a 311-amino-acid chain: MSTPGAQEVLFRTGIAAVNSTNHLRVYFQDSHGSIRESLYESGWANGTAKNVIAKAKLGTPLAATSKELKNIRVYSLTEDNVLQEAAYDSGSGWYNGALAGAKFTVAPYSRIGSVFLAGTNALQLRIYAQKTDNTIQEYMWNGDGWKEGTNLGVALPGTGIGVTCWRYTDYDGPSIRVWFQTDNLKLVQRAYDPHTGWYKELTTIFDKAPPRCAIAATNFNPGKSSIYMRIYFVNSDNTIWQVCWDHGQGYHDKRTITPVIQGSEIAIISWEGPELRLYFQNGTYVSAISEWTWGKAHGSQLGRRALPPAE.

Repeat copies occupy residues 1–53 (MSTP…KNVI), 54–103 (AKAK…AGAK), 104–151 (FTVA…EGTN), 152–209 (LGVA…FDKA), 210–256 (PPRC…DKRT), and 257–311 (ITPV…PPAE). The 6 X approximate tandem repeats stretch occupies residues 1–311 (MSTPGAQEVL…LGRRALPPAE (311 aa)). Residues Arg-25, Glu-37, Trp-44, Arg-73, Glu-85, Trp-94, Arg-126, Glu-138, Trp-146, Arg-177, Gln-189, Trp-198, Arg-230, Gln-242, Arg-277, and Glu-291 each contribute to the beta-L-fucose site.

This sequence belongs to the fungal fucose-specific lectin family. In terms of assembly, homodimer.

Its function is as follows. Lectin that specifically binds to L-fucose and weakly reacts with mannose and N-acetyl-neuraminic acid. Has strongest preference for the alpha-1,6-fucosylated chain (core fucose) on glycoproteins among alpha-1,2-, alpha-1,3-, alpha-1,4-, and alpha-1,6-fucosylated chains. Binds to fucose residues of IgE in mice and human, causing antigen-independent IgE-mediated mast cell activation and anaphylactoid reactions in mice and is possibly implicated in allergic response to Aspergillus oryzae in humans. Induces secretion of pro-inflammatory cytokines IL6 and IL8 implicated in ocular diseases such as mycotic keratitis, probably through its interaction with host toll-like receptors TLR2 and TLR4, followed by up-regulation of pro-inflammatory cytokines. This is Fucose-specific lectin from Aspergillus oryzae (strain ATCC 42149 / RIB 40) (Yellow koji mold).